Reading from the N-terminus, the 290-residue chain is Shikimate dehydrogenase (NADP(+)) (290 aa).

Shikimate is bound by residues Ser-18–Ser-20 and Thr-66. The Proton acceptor role is filled by Lys-70. Glu-82 is an NADP(+) binding site. Residues Asn-91 and Asp-106 each contribute to the shikimate site. NADP(+) contacts are provided by residues Gly-130–Ala-134 and Met-229. Tyr-231 is a binding site for shikimate. Residue Gly-252 coordinates NADP(+).

This sequence belongs to the shikimate dehydrogenase family. In terms of assembly, homodimer.

It catalyses the reaction shikimate + NADP(+) = 3-dehydroshikimate + NADPH + H(+). Its pathway is metabolic intermediate biosynthesis; chorismate biosynthesis; chorismate from D-erythrose 4-phosphate and phosphoenolpyruvate: step 4/7. Involved in the biosynthesis of the chorismate, which leads to the biosynthesis of aromatic amino acids. Catalyzes the reversible NADPH linked reduction of 3-dehydroshikimate (DHSA) to yield shikimate (SA). The protein is Shikimate dehydrogenase (NADP(+)) of Chlorobium phaeovibrioides (strain DSM 265 / 1930) (Prosthecochloris vibrioformis (strain DSM 265)).